The chain runs to 328 residues: MTRTNLITGFLGSGKTTSILHLLAHKDPNEKWAVLVNEFGEVGIDGALLADSGALLKEIPGGCMCCVNGLPMQVGLNTLLRQGKPDRLLIEPTGLGHPKQILDLLTAPVYEPWIDLRATLCILDPRLLLDEKSASNENFRDQLAAADIIVANKSDRTTPESEQALQRWWQQNGGDRQLIHSEHGKVDGHLLDLPRRNLAELPASAAHSHQHVVKKGLAALSLPEHQRWRRSLNSGQGYQACGWIFDADTVFDTIGILEWARLAPVERVKGVLRIPEGLVRINRQGDDLHIETQNVAPPDSRIELISSSEADWNALQSALLKLRLATTA.

GTP is bound at residue glycine 9–threonine 17. The CXCC motif signature appears at cysteine 63–cysteine 66. Aspartate 155 serves as a coordination point for GTP. In terms of domain architecture, CobW C-terminal spans cysteine 241–lysine 321.

It belongs to the SIMIBI class G3E GTPase family. ZNG1 subfamily. Oligomerizes in the presence of Zn(2+).

The catalysed reaction is GTP + H2O = GDP + phosphate + H(+). With respect to regulation, GTPase activity is enhanced by Zn(2+) binding. Zinc chaperone that directly transfers zinc cofactor to target proteins, thereby activating them. Zinc is transferred from the CXCC motif in the GTPase domain to the zinc binding site in target proteins in a process requiring GTP hydrolysis. The sequence is that of Zinc chaperone YeiR (yeiR) from Escherichia coli (strain K12).